Consider the following 635-residue polypeptide: Biosynthetic arginine decarboxylase (635 aa).

Residue K100 is modified to N6-(pyridoxal phosphate)lysine. 282 to 292 (VDIGGGLGVDY) lines the substrate pocket.

The protein belongs to the Orn/Lys/Arg decarboxylase class-II family. SpeA subfamily. It depends on Mg(2+) as a cofactor. Requires pyridoxal 5'-phosphate as cofactor.

The enzyme catalyses L-arginine + H(+) = agmatine + CO2. The protein operates within amine and polyamine biosynthesis; agmatine biosynthesis; agmatine from L-arginine: step 1/1. Catalyzes the biosynthesis of agmatine from arginine. This Geobacter metallireducens (strain ATCC 53774 / DSM 7210 / GS-15) protein is Biosynthetic arginine decarboxylase.